A 184-amino-acid polypeptide reads, in one-letter code: NADH-quinone oxidoreductase subunit B (184 aa).

Cysteine 37, cysteine 38, cysteine 103, and cysteine 132 together coordinate [4Fe-4S] cluster.

The protein belongs to the complex I 20 kDa subunit family. As to quaternary structure, NDH-1 is composed of 14 different subunits. Subunits NuoB, C, D, E, F, and G constitute the peripheral sector of the complex. Requires [4Fe-4S] cluster as cofactor.

It localises to the cell membrane. It carries out the reaction a quinone + NADH + 5 H(+)(in) = a quinol + NAD(+) + 4 H(+)(out). Its function is as follows. NDH-1 shuttles electrons from NADH, via FMN and iron-sulfur (Fe-S) centers, to quinones in the respiratory chain. The immediate electron acceptor for the enzyme in this species is believed to be a menaquinone. Couples the redox reaction to proton translocation (for every two electrons transferred, four hydrogen ions are translocated across the cytoplasmic membrane), and thus conserves the redox energy in a proton gradient. The sequence is that of NADH-quinone oxidoreductase subunit B from Mycobacteroides abscessus (strain ATCC 19977 / DSM 44196 / CCUG 20993 / CIP 104536 / JCM 13569 / NCTC 13031 / TMC 1543 / L948) (Mycobacterium abscessus).